The primary structure comprises 329 residues: Ketol-acid reductoisomerase (NADP(+)) (329 aa).

Positions 2–182 (ARMYYEKDVD…GATRAGVLET (181 aa)) constitute a KARI N-terminal Rossmann domain. Residues 25 to 28 (YGSQ), Ser-51, Ser-53, and 83 to 86 (DEKQ) contribute to the NADP(+) site. The active site involves His-108. Gly-134 serves as a coordination point for NADP(+). A KARI C-terminal knotted domain is found at 183–328 (TFKEETETDL…RNLRSMMSFL (146 aa)). Residues Asp-191, Glu-195, Glu-227, and Glu-231 each contribute to the Mg(2+) site. Ser-252 contributes to the substrate binding site.

It belongs to the ketol-acid reductoisomerase family. Requires Mg(2+) as cofactor.

It catalyses the reaction (2R)-2,3-dihydroxy-3-methylbutanoate + NADP(+) = (2S)-2-acetolactate + NADPH + H(+). The catalysed reaction is (2R,3R)-2,3-dihydroxy-3-methylpentanoate + NADP(+) = (S)-2-ethyl-2-hydroxy-3-oxobutanoate + NADPH + H(+). It participates in amino-acid biosynthesis; L-isoleucine biosynthesis; L-isoleucine from 2-oxobutanoate: step 2/4. It functions in the pathway amino-acid biosynthesis; L-valine biosynthesis; L-valine from pyruvate: step 2/4. In terms of biological role, involved in the biosynthesis of branched-chain amino acids (BCAA). Catalyzes an alkyl-migration followed by a ketol-acid reduction of (S)-2-acetolactate (S2AL) to yield (R)-2,3-dihydroxy-isovalerate. In the isomerase reaction, S2AL is rearranged via a Mg-dependent methyl migration to produce 3-hydroxy-3-methyl-2-ketobutyrate (HMKB). In the reductase reaction, this 2-ketoacid undergoes a metal-dependent reduction by NADPH to yield (R)-2,3-dihydroxy-isovalerate. The chain is Ketol-acid reductoisomerase (NADP(+)) from Clostridioides difficile (strain 630) (Peptoclostridium difficile).